A 131-amino-acid polypeptide reads, in one-letter code: SPbeta prophage-derived UPF0715 membrane protein YopD (131 aa).

4 helical membrane passes run 12–32, 38–58, 75–95, and 108–128; these read VYTLAFSSLSFGLIFGLYLFV, AIALVTIAIIAFYALITYLVF, LINFLIYIAVAFSAVFLFWFV, and FEYYIMSIVAAFIYWFWDSIF.

This sequence belongs to the UPF0715 family.

The protein localises to the cell membrane. The polypeptide is SPbeta prophage-derived UPF0715 membrane protein YopD (yopD) (Bacillus subtilis (strain 168)).